The following is an 87-amino-acid chain: Small ribosomal subunit protein bS20 (87 aa).

The interval 1-25 is disordered; the sequence is MANSAQARKRARQNISHRNRNMSLR. The span at 7 to 20 shows a compositional bias: basic residues; that stretch reads ARKRARQNISHRNR.

Belongs to the bacterial ribosomal protein bS20 family.

Its function is as follows. Binds directly to 16S ribosomal RNA. This chain is Small ribosomal subunit protein bS20, found in Nitrosospira multiformis (strain ATCC 25196 / NCIMB 11849 / C 71).